A 476-amino-acid polypeptide reads, in one-letter code: Zinc metalloproteinase/disintegrin (476 aa).

The N-terminal stretch at 1–20 (MIQVLLVIICLADFPYQGTS) is a signal peptide. The propeptide occupies 21–184 (IILESGNVND…KSDEPIKASQ (164 aa)). Pyrrolidone carboxylic acid is present on Q185. The Peptidase M12B domain occupies 191–387 (RYIELVVVAD…RNPQCILNEP (197 aa)). Ca(2+)-binding residues include E194 and D278. Intrachain disulfides connect C302/C382, C342/C366, and C344/C349. Zn(2+) is bound at residue H327. The active site involves E328. The Zn(2+) site is built by H331 and H337. Ca(2+) contacts are provided by C382 and N385. Positions 388 to 403 (LRTDTVSTPVSGNELL) are excised as a propeptide. The Disintegrin domain maps to 395-476 (TPVSGNELLE…AGCPRNGFYG (82 aa)). Disulfide bonds link C409/C424, C411/C419, C418/C441, C432/C438, C437/C462, and C450/C469. The short motif at 454 to 456 (KGD) is the Cell attachment site element.

Belongs to the venom metalloproteinase (M12B) family. P-II subfamily. P-IId sub-subfamily. As to quaternary structure, homodimer; disulfide-linked (disintegrin). It depends on Zn(2+) as a cofactor. In terms of tissue distribution, expressed by the venom gland.

The protein resides in the secreted. Its activity is regulated as follows. The metalloproteinase is inhibited by EDTA, o-phenanthroline, and cysteine. Glutathione does not inhibit the enzymatic activity. Its function is as follows. Shows weak degradation of alpha-fibrinogen, but has no activity on beta- and gamma-chains. Digests luteinizing hormone-releasing hormone (LH-RH) and oxidized insulin at X-Leu, X-Phe, and X-Val bonds as well as X-His bond. Does not show fibrinogen-clotting activity. Does not show hemorrhagic activity. Functionally, inhibits ADP-induced platelet aggregation. The chain is Zinc metalloproteinase/disintegrin from Gloydius brevicauda (Korean slamosa snake).